The sequence spans 924 residues: MLGGLARKIFGSANDRRVRGYRPSVEAINKLEPELETLTDEQLRERTVMFRQQLAEGKTLDDLLVPAFATVREAAKRVMGMRHFDVQLIGGMVLHDAGIAEMRTGEGKTLVATLPVYLNALAGKGVHVVTVNDYLARRDAEWMAKVYGFLGLTTGIIVHGLDDDQRRAAYACDVTYATNNELGFDYLRDNMKYERAQMVQRPHYFAIVDEVDSILIDEARTPLIISGPLDDRSDFYNTIDKFIPRLSKGDYEVDEKQRSVAMTEAGMEKMEQMLTEAELLKSGSLYDIENVSIVHHVNQALRAHSLFQRDKDYIVRNDEVVIIDEFTGRMMPGRRYSEGLHQALEAKERVTVQPENQTLASITFQNYFRLYERLGGMTGTAATEAAEFADIYKLDVVEIPTNRKVQRIDDDDEVYRTNREKFDAIVKLIQECAARKQPVLVGTTSIEKSELLAERLKQAGMRQKDFSDRAAFTGSSDGKSFAVLNARYHEQEAFIVAQAGVPGAVTIATNMAGRGTDIQLGGNAEMRISEELADLPAGPEREAAEAKIREEIAALKQEALAAGGLFVLGTERHESRRIDNQLRGRSGRQGDPGHSKFFLSLEDDLMRIFGSDRLEGMLKRLGLQEGEAIIHPWINRALEKAQQKVEARNYDMRKNVLKYDDVLNDQRKVVFEQRLELMNDEDVAETVVDMRHDVITDLVAKYIPVNSYPEQWDVKGLDFAVRDVLTLALPIEDWAKEEGIAGPEVTERIIQKADEWMASKSAQYGPELMRYVEKSILLQTLDHLWREHIAMLDHLRQVIGLRGYGQRDPLQEYKSEAFQLFSAMLGRLREIVTAQLMRVEIVSTPQPTELPPMEAHHIDASTGEDELASAGAALSARPELALATEVPAADRDPNDPSTWGKVGRNEPCPCGSGKKFKHCHGRFA.

ATP-binding positions include Q87, 105–109, and D517; that span reads GEGKT. Positions 886–906 are disordered; sequence VPAADRDPNDPSTWGKVGRNE. Zn(2+)-binding residues include C908, C910, C919, and H920.

This sequence belongs to the SecA family. Monomer and homodimer. Part of the essential Sec protein translocation apparatus which comprises SecA, SecYEG and auxiliary proteins SecDF-YajC and YidC. Zn(2+) is required as a cofactor.

It is found in the cell inner membrane. Its subcellular location is the cytoplasm. It carries out the reaction ATP + H2O + cellular proteinSide 1 = ADP + phosphate + cellular proteinSide 2.. Part of the Sec protein translocase complex. Interacts with the SecYEG preprotein conducting channel. Has a central role in coupling the hydrolysis of ATP to the transfer of proteins into and across the cell membrane, serving both as a receptor for the preprotein-SecB complex and as an ATP-driven molecular motor driving the stepwise translocation of polypeptide chains across the membrane. The polypeptide is Protein translocase subunit SecA (Azorhizobium caulinodans (strain ATCC 43989 / DSM 5975 / JCM 20966 / LMG 6465 / NBRC 14845 / NCIMB 13405 / ORS 571)).